The following is a 78-amino-acid chain: Conotoxin 6 (78 aa).

The N-terminal stretch at 1–22 (MKLTCMMIVAVLFLTAWIFITA) is a signal peptide. A propeptide spanning residues 23 to 51 (DNSRNGIENLPRMRRHEMKNPKASKLNKR) is cleaved from the precursor. Intrachain disulfides connect Cys-53/Cys-69, Cys-60/Cys-73, and Cys-68/Cys-77.

Belongs to the conotoxin O1 superfamily. Expressed by the venom duct.

The protein localises to the secreted. The polypeptide is Conotoxin 6 (Conus imperialis (Imperial cone)).